Here is a 150-residue protein sequence, read N- to C-terminus: Transcriptional repressor NrdR (150 aa).

Residues 3-34 fold into a zinc finger; it reads CPFCNFSDSKVVDSRPDKGGAAIRRRRECESC. Residues 49 to 139 enclose the ATP-cone domain; sequence PLVTKRDGRR…VYRSFKDINE (91 aa).

Belongs to the NrdR family. It depends on Zn(2+) as a cofactor.

In terms of biological role, negatively regulates transcription of bacterial ribonucleotide reductase nrd genes and operons by binding to NrdR-boxes. The chain is Transcriptional repressor NrdR from Citrifermentans bemidjiense (strain ATCC BAA-1014 / DSM 16622 / JCM 12645 / Bem) (Geobacter bemidjiensis).